Consider the following 263-residue polypeptide: Glutamate racemase (263 aa).

Residues 13 to 14 (DS) and 45 to 46 (YG) contribute to the substrate site. The Proton donor/acceptor role is filled by Cys77. 78–79 (NT) is a substrate binding site. Catalysis depends on Cys185, which acts as the Proton donor/acceptor. Substrate is bound at residue 186–187 (TH).

The protein belongs to the aspartate/glutamate racemases family.

The catalysed reaction is L-glutamate = D-glutamate. It participates in cell wall biogenesis; peptidoglycan biosynthesis. Provides the (R)-glutamate required for cell wall biosynthesis. The chain is Glutamate racemase from Vibrio vulnificus (strain CMCP6).